The sequence spans 467 residues: UDP-N-acetylmuramoylalanine--D-glutamate ligase (467 aa).

Residue glycine 121–threonine 127 participates in ATP binding.

Belongs to the MurCDEF family.

It localises to the cytoplasm. The catalysed reaction is UDP-N-acetyl-alpha-D-muramoyl-L-alanine + D-glutamate + ATP = UDP-N-acetyl-alpha-D-muramoyl-L-alanyl-D-glutamate + ADP + phosphate + H(+). Its pathway is cell wall biogenesis; peptidoglycan biosynthesis. Functionally, cell wall formation. Catalyzes the addition of glutamate to the nucleotide precursor UDP-N-acetylmuramoyl-L-alanine (UMA). The protein is UDP-N-acetylmuramoylalanine--D-glutamate ligase of Brucella abortus (strain 2308).